A 117-amino-acid polypeptide reads, in one-letter code: Large ribosomal subunit protein uL23 (117 aa).

Belongs to the universal ribosomal protein uL23 family. Part of the 50S ribosomal subunit. Contacts protein L29, and trigger factor when it is bound to the ribosome.

Its function is as follows. One of the early assembly proteins it binds 23S rRNA. One of the proteins that surrounds the polypeptide exit tunnel on the outside of the ribosome. Forms the main docking site for trigger factor binding to the ribosome. The chain is Large ribosomal subunit protein uL23 from Ruminiclostridium cellulolyticum (strain ATCC 35319 / DSM 5812 / JCM 6584 / H10) (Clostridium cellulolyticum).